A 176-amino-acid chain; its full sequence is Large ribosomal subunit protein uL6 (176 aa).

Belongs to the universal ribosomal protein uL6 family. Part of the 50S ribosomal subunit.

In terms of biological role, this protein binds to the 23S rRNA, and is important in its secondary structure. It is located near the subunit interface in the base of the L7/L12 stalk, and near the tRNA binding site of the peptidyltransferase center. This is Large ribosomal subunit protein uL6 from Shewanella sediminis (strain HAW-EB3).